A 307-amino-acid polypeptide reads, in one-letter code: MPVQHRTTVVGNTSTLKSPVGILRILEVIFACVTFSLVVHTGRWTGRIGDLCMFCWCFCFAVSLVILIVEFTGVQNRMPVSWKNFPITFAMYAVLMCLSATVIYPLQYLEDKAYSSEVRNYQIVAIVFSCLTTLAYIIEVSLTRAKPGEVTGYMATTPGLLKVLETFIACIIFVFISDPPLYDRHDALKWCLAVYCICFILSIVVIILCVGECTGWLPCAFNKFLSGYALLAVLMYASAMIIWPIFSFDRKHGGTASRPSNCRSSPGNLYAVCEWDKMVAVAVLTAVNLIAYVMDLVYSARLIFITV.

MARVEL domains are found at residues 15–148 (TLKS…AKPG) and 153–304 (YMAT…RLIF). 8 consecutive transmembrane segments (helical) span residues 19–39 (PVGI…SLVV), 51–71 (LCMF…IVEF), 85–105 (FPIT…VIYP), 123–143 (IVAI…VSLT), 156–176 (TTPG…FVFI), 190–210 (WCLA…ILCV), 228–248 (YALL…IFSF), and 278–298 (MVAV…DLVY).

Belongs to the MAL family.

Its subcellular location is the membrane. This is Myeloid-associated differentiation marker homolog (myadm) from Xenopus laevis (African clawed frog).